A 142-amino-acid polypeptide reads, in one-letter code: Putative 2'-deoxynucleoside 5'-phosphate N-hydrolase 1 (142 aa).

Substrate is bound by residues 4-10, Tyr-19, His-36, Glu-82, and 106-108; these read FFSGSIR and SAM.

The protein belongs to the 2'-deoxynucleoside 5'-phosphate N-hydrolase 1 family. Monomer and homodimer.

The catalysed reaction is a pyrimidine 2'-deoxyribonucleoside 5'-phosphate + H2O = a pyrimidine nucleobase + 2-deoxy-D-ribose 5-phosphate. It carries out the reaction a purine 2'-deoxyribonucleoside 5'-phosphate + H2O = a purine nucleobase + 2-deoxy-D-ribose 5-phosphate. Functionally, catalyzes the cleavage of the N-glycosidic bond of deoxyribonucleoside 5'-monophosphates to yield deoxyribose 5-phosphate and a purine or pyrimidine base. The protein is Putative 2'-deoxynucleoside 5'-phosphate N-hydrolase 1 of Syntrophotalea carbinolica (strain DSM 2380 / NBRC 103641 / GraBd1) (Pelobacter carbinolicus).